The primary structure comprises 1194 residues: Cohesin subunit SA-2 (1194 aa).

One can recognise an SCD domain in the interval 224–309 (FVHRYRDAIA…SRFKDRIVSM (86 aa)). A disordered region spans residues 986–1027 (DTMSVMSGMSGRGSSTRSKKIKPPTGKRKLPEAEESSSSDSM). Positions 988-1001 (MSVMSGMSGRGSST) are enriched in low complexity. The segment covering 1002–1013 (RSKKIKPPTGKR) has biased composition (basic residues).

It belongs to the SCC3 family. Part of the cohesin complex which is composed of a heterodimer between a SMC1 protein (SMC1A or SMC1B) and SMC3, which are attached via their hinge domain, and RAD21 which link them at their heads, and one STAG protein (STAG1, STAG2 or STAG3). In cohesin complexes, STAG2 is mutually exclusive with STAG1 and STAG3. Interacts directly with RAD21 in cohesin complex. Phosphorylated by PLK1. The large dissociation of cohesin from chromosome arms during prophase is partly due to its phosphorylation.

The protein localises to the nucleus. It localises to the chromosome. Its subcellular location is the centromere. Its function is as follows. Component of cohesin complex, a complex required for the cohesion of sister chromatids after DNA replication. The cohesin complex apparently forms a large proteinaceous ring within which sister chromatids can be trapped. At anaphase, the complex is cleaved and dissociates from chromatin, allowing sister chromatids to segregate. The cohesin complex may also play a role in spindle pole assembly during mitosis. The protein is Cohesin subunit SA-2 (stag2) of Xenopus laevis (African clawed frog).